We begin with the raw amino-acid sequence, 506 residues long: (+)-vincadifformine 19-hydroxylase (506 aa).

At M1–D4 the chain is on the lumenal side. Residues E5–L25 form a helical membrane-spanning segment. Topologically, residues R26 to M506 are cytoplasmic. Position 450 (C450) interacts with heme.

Belongs to the cytochrome P450 family. It depends on heme as a cofactor. In terms of tissue distribution, accumulates progressively in roots.

The protein resides in the endoplasmic reticulum membrane. It carries out the reaction (+)-vincadifformine + reduced [NADPH--hemoprotein reductase] + O2 = (+)-minovincinine + oxidized [NADPH--hemoprotein reductase] + H2O + H(+). It participates in alkaloid biosynthesis. Its activity is regulated as follows. The enantiomer (-)-vincadifformine acts as a competitive inhibitor. Functionally, component of the monoterpenoid indole alkaloids (MIAs, e.g. echitovenine, tabersonine, lochnericine, 19-hydroxytabersonine and horhammericine) biosynthetic pathway; MIAs are used in cancer treatment and other medical applications. Cytochrome P450 catalyzing the hydroxylation of (+)-vincadifformine to (+)-minovincinine. In Catharanthus roseus (Madagascar periwinkle), this protein is (+)-vincadifformine 19-hydroxylase.